A 250-amino-acid polypeptide reads, in one-letter code: uncharacterized protein (250 aa).

A helical transmembrane segment spans residues 2–22; that stretch reads ILRIIIFVIIILVVSLLLIYF.

It is found in the membrane. This is an uncharacterized protein from Acanthamoeba polyphaga (Amoeba).